The chain runs to 210 residues: Protein GrpE (210 aa).

Residues 191–210 (KGGPKPAEAETNSVFDEKDA) are disordered.

Belongs to the GrpE family. As to quaternary structure, homodimer.

Its subcellular location is the cytoplasm. In terms of biological role, participates actively in the response to hyperosmotic and heat shock by preventing the aggregation of stress-denatured proteins, in association with DnaK and GrpE. It is the nucleotide exchange factor for DnaK and may function as a thermosensor. Unfolded proteins bind initially to DnaJ; upon interaction with the DnaJ-bound protein, DnaK hydrolyzes its bound ATP, resulting in the formation of a stable complex. GrpE releases ADP from DnaK; ATP binding to DnaK triggers the release of the substrate protein, thus completing the reaction cycle. Several rounds of ATP-dependent interactions between DnaJ, DnaK and GrpE are required for fully efficient folding. The chain is Protein GrpE from Rhizobium etli (strain CIAT 652).